Consider the following 227-residue polypeptide: Cleavage and polyadenylation specificity factor subunit 5 (227 aa).

Position 2 is an N-acetylserine (Ser-2). The interval 2–147 (SVVPPNRSQT…DWVIDDCIGN (146 aa)) is necessary for RNA-binding. At Arg-15 the chain carries Omega-N-methylarginine. Residues Lys-23 and Lys-29 each carry the N6-acetyllysine modification. A Phosphotyrosine modification is found at Tyr-40. Residue Lys-56 is modified to N6-acetyllysine. The Nudix hydrolase domain occupies 76-201 (MRRTVEGVLI…KLVAAPLFEL (126 aa)). The necessary for interactions with PAPOLA and PABPN1 stretch occupies residues 81–160 (EGVLIVHEHR…PNFEPPQYPY (80 aa)). Residues 102-104 (TFF) form an interaction with RNA region. The Nudix box motif lies at 109 to 130 (GELNPGEDEVEGLKRLMTEILG).

It belongs to the Nudix hydrolase family. CPSF5 subfamily. Homodimer (via N- and C-terminus); binds RNA as homodimer. Component of the cleavage factor Im (CFIm) complex which is a heterotetramer composed of two subunits of NUDT21/CPSF5 and two subunits of CPSF6 or CPSF7 or a heterodimer of CPSF6 and CPSF7. The cleavage factor Im (CFIm) complex associates with the CPSF and CSTF complexes to promote the assembly of the core mRNA 3'-processing machinery. Interacts with CPSF6 (via the RRM domain); this interaction is direct and enhances binding to RNA. Interacts with CPSF7. Interacts with FIP1L1; this interaction occurs in a RNA sequence-specific manner. Interacts with PABPN1. Interacts (via N-terminus) with PAPOLA (via C-terminus); this interaction is direct and diminished by acetylation. Interacts with SNRNP70. Interacts with VIRMA. In terms of processing, acetylated mainly by p300/CBP, recruited to the complex by CPSF6. Acetylation decreases interaction with PAPAO. Deacetylated by the class I/II HDACs, HDAC1, HDAC3 and HDAC10, and by the class III HDACs, SIRT1 and SIRT2.

The protein localises to the nucleus. Its subcellular location is the cytoplasm. Its function is as follows. Component of the cleavage factor Im (CFIm) complex that functions as an activator of the pre-mRNA 3'-end cleavage and polyadenylation processing required for the maturation of pre-mRNA into functional mRNAs. CFIm contributes to the recruitment of multiprotein complexes on specific sequences on the pre-mRNA 3'-end, so called cleavage and polyadenylation signals (pA signals). Most pre-mRNAs contain multiple pA signals, resulting in alternative cleavage and polyadenylation (APA) producing mRNAs with variable 3'-end formation. The CFIm complex acts as a key regulator of cleavage and polyadenylation site choice during APA through its binding to 5'-UGUA-3' elements localized in the 3'-untranslated region (UTR) for a huge number of pre-mRNAs. NUDT21/CPSF5 activates indirectly the mRNA 3'-processing machinery by recruiting CPSF6 and/or CPSF7. Binds to 5'-UGUA-3' elements localized upstream of pA signals that act as enhancers of pre-mRNA 3'-end processing. The homodimer mediates simultaneous sequence-specific recognition of two 5'-UGUA-3' elements within the pre-mRNA. Plays a role in somatic cell fate transitions and pluripotency by regulating widespread changes in gene expression through an APA-dependent function. Binds to chromatin. Binds to, but does not hydrolyze mono- and di-adenosine nucleotides. In Bos taurus (Bovine), this protein is Cleavage and polyadenylation specificity factor subunit 5 (NUDT21).